The following is a 120-amino-acid chain: UPF0295 protein Aflv_0370 (120 aa).

2 helical membrane passes run 12–32 and 42–62; these read IRTF…GGIF and LFMI…FWIG.

Belongs to the UPF0295 family.

The protein resides in the cell membrane. In Anoxybacillus flavithermus (strain DSM 21510 / WK1), this protein is UPF0295 protein Aflv_0370.